The chain runs to 325 residues: CRISPR-associated endonuclease Cas1 2 (325 aa).

3 residues coordinate Mn(2+): Glu-145, His-212, and Asp-225. A disordered region spans residues 283 to 325; sequence EEEDPVEEDPTRPGGLWDLEGEVEGGVAYGGDDPGEGAEEPEG. Residues 315–325 are compositionally biased toward acidic residues; sequence DPGEGAEEPEG.

The protein belongs to the CRISPR-associated endonuclease Cas1 family. Homodimer, forms a heterotetramer with a Cas2 homodimer. Mg(2+) is required as a cofactor. Requires Mn(2+) as cofactor.

Its function is as follows. CRISPR (clustered regularly interspaced short palindromic repeat), is an adaptive immune system that provides protection against mobile genetic elements (viruses, transposable elements and conjugative plasmids). CRISPR clusters contain spacers, sequences complementary to antecedent mobile elements, and target invading nucleic acids. CRISPR clusters are transcribed and processed into CRISPR RNA (crRNA). Acts as a dsDNA endonuclease. Involved in the integration of spacer DNA into the CRISPR cassette. The sequence is that of CRISPR-associated endonuclease Cas1 2 from Thermus thermophilus (strain ATCC 27634 / DSM 579 / HB8).